The chain runs to 504 residues: Maturase K (504 aa).

This sequence belongs to the intron maturase 2 family. MatK subfamily.

The protein localises to the plastid. It is found in the chloroplast. In terms of biological role, usually encoded in the trnK tRNA gene intron. Probably assists in splicing its own and other chloroplast group II introns. This is Maturase K from Quercus cerris (Turkey oak).